Reading from the N-terminus, the 788-residue chain is Autophagy-related protein 9 (788 aa).

Residues M1–G171 lie on the Cytoplasmic side of the membrane. Positions I32 to Q42 are enriched in basic and acidic residues. The interval I32 to R127 is disordered. Positions S44–D58 are enriched in low complexity. The segment covering S101–I112 has biased composition (polar residues). Residues L172–F192 traverse the membrane as a helical segment. Residues S193 to K222 lie on the Lumenal side of the membrane. The chain crosses the membrane as a helical span at residues L223–F243. Over Q244 to R390 the chain is Cytoplasmic. F391 is an intramembrane region. The Cytoplasmic portion of the chain corresponds to V392–K479. A helical membrane pass occupies residues F480 to P500. Over E501–R512 the chain is Lumenal. A helical membrane pass occupies residues T513 to P533. At E534–R579 the chain is on the cytoplasmic side. Residues L580–S600 lie within the membrane without spanning it. At L601–A788 the chain is on the cytoplasmic side. The interval L715 to R736 is disordered. The span at S716 to A734 shows a compositional bias: low complexity.

It belongs to the ATG9 family. As to quaternary structure, homotrimer; forms a homotrimer with a central pore that forms a path between the two membrane leaflets. In terms of processing, phosphorylated by ATG1. ATG1 phosphorylation is required for preautophagosome elongation.

The protein resides in the preautophagosomal structure membrane. It localises to the cytoplasmic vesicle membrane. The protein localises to the golgi apparatus membrane. It is found in the endoplasmic reticulum membrane. The catalysed reaction is a 1,2-diacyl-sn-glycero-3-phosphocholine(in) = a 1,2-diacyl-sn-glycero-3-phosphocholine(out). It catalyses the reaction a 1,2-diacyl-sn-glycero-3-phospho-L-serine(in) = a 1,2-diacyl-sn-glycero-3-phospho-L-serine(out). It carries out the reaction a 1,2-diacyl-sn-glycero-3-phosphoethanolamine(in) = a 1,2-diacyl-sn-glycero-3-phosphoethanolamine(out). The enzyme catalyses a 1,2-diacyl-sn-glycero-3-phospho-(1D-myo-inositol-3-phosphate)(in) = a 1,2-diacyl-sn-glycero-3-phospho-(1D-myo-inositol-3-phosphate)(out). Its function is as follows. Phospholipid scramblase involved in autophagy and cytoplasm to vacuole transport (Cvt) vesicle formation. Cycles between the preautophagosomal structure/phagophore assembly site (PAS) and the cytoplasmic vesicle pool and supplies membrane for the growing autophagosome. Lipid scramblase activity plays a key role in preautophagosomal structure/phagophore assembly by distributing the phospholipids that arrive through ATG2 from the cytoplasmic to the luminal leaflet of the bilayer, thereby driving autophagosomal membrane expansion. Required for mitophagy. Also involved in endoplasmic reticulum-specific autophagic process and is essential for the survival of cells subjected to severe ER stress. Different machineries are required for anterograde trafficking to the PAS during either the Cvt pathway or bulk autophagy and for retrograde trafficking. This Yarrowia lipolytica (strain CLIB 122 / E 150) (Yeast) protein is Autophagy-related protein 9.